The primary structure comprises 498 residues: Diacylglycerol O-acyltransferase 1 (498 aa).

A disordered region spans residues 1-66 (MGDRGGAGSS…AHTRDKDGRT (66 aa)). At 1-92 (MGDRGGAGSS…SLFSSDSGFS (92 aa)) the chain is on the cytoplasmic side. Residues 1–100 (MGDRGGAGSS…FSNYRGILNW (100 aa)) form an involved in homomerization region. At serine 20 the chain carries Phosphoserine. A helical membrane pass occupies residues 93–127 (NYRGILNWCVVMLILSNARLFLENLIKYGILVDPI). The Lumenal segment spans residues 128–139 (QVVSLFLKDPYS). The interval 128 to 139 (QVVSLFLKDPYS) is extracellular loop 1 (EL1). The helical transmembrane segment at 140-165 (WPAPCVIIASNIFVVAAFQIEKRLAV) threads the bilayer. Positions 140–498 (WPAPCVIIAS…VLNYDAPVGV (359 aa)) are MBOAT fold. Topologically, residues 166 to 170 (GALTE) are cytoplasmic. The chain crosses the membrane as a helical span at residues 171 to 193 (QMGLLLHVVNLATIICFPAAVAL). Residues 194 to 200 (LVESITP) lie on the Lumenal side of the membrane. Residues 201–232 (VGSVFALASYSIMFLKLYSYRDVNLWCRQRRV) traverse the membrane as a helical segment. Over 233–284 (KAKAVSTGKKVSGAAAQQAVSYPDNLTYRDLYYFIFAPTLCYELNFPRSPRI) the chain is Cytoplasmic. Residues 235-287 (KAVSTGKKVSGAAAQQAVSYPDNLTYRDLYYFIFAPTLCYELNFPRSPRIRKR) are intracellular loop 1 (IL1). A helical membrane pass occupies residues 285 to 319 (RKRFLLRRVLEMLFFTQLQVGLIQQWMVPTIQNSM). Over 320-326 (KPFKDMD) the chain is Lumenal. The helical transmembrane segment at 327-364 (YSRIIERLLKLAVPNHLIWLIFFYWFFHSCLNAVAELL) threads the bilayer. Residues 365-410 (QFGDREFYRDWWNAESVTYFWQNWNIPVHKWCIRHFYKPMLRHGSS) are Cytoplasmic-facing. Residues 365 to 410 (QFGDREFYRDWWNAESVTYFWQNWNIPVHKWCIRHFYKPMLRHGSS) form an intracellular loop 2 (IL2) region. The FYXDWWN motif motif lies at 371-377 (FYRDWWN). An acyl-CoA-binding positions include 385 to 393 (WQNWNIPVH), tyrosine 401, and arginine 415. The segment at 391–405 (PVHKWCIRHFYKPML) is amphipathic helix (AH). A helical transmembrane segment spans residues 411-431 (KWVARTGVFLTSAFFHEYLVS). Histidine 426 is a catalytic residue. Over 432-439 (VPLRMFRL) the chain is Lumenal. A helical transmembrane segment spans residues 440 to 458 (WAFTAMMAQVPLAWIVGRF). The Cytoplasmic segment spans residues 459–460 (FQ). A helical transmembrane segment spans residues 461–492 (GNYGNAAVWVTLIIGQPVAVLMYVHDYYVLNY). Tyrosine 488 serves as a coordination point for an acyl-CoA. The Lumenal portion of the chain corresponds to 493-498 (DAPVGV).

Belongs to the membrane-bound acyltransferase family. Sterol o-acyltransferase subfamily. As to quaternary structure, homodimer or homotetramer; both forms have similar enzymatic activities.

The protein localises to the endoplasmic reticulum membrane. It catalyses the reaction an acyl-CoA + a 1,2-diacyl-sn-glycerol = a triacyl-sn-glycerol + CoA. The enzyme catalyses all-trans-retinol + an acyl-CoA = an all-trans-retinyl ester + CoA. The catalysed reaction is 1-octadecanoyl-2-(5Z,8Z,11Z,14Z-eicosatetraenoyl)-sn-glycerol + (9Z)-octadecenoyl-CoA = 1-octadecanoyl-2-(5Z,8Z,11Z,14Z)-eicosatetraenoyl-3-(9Z)-octadecenoyl-sn-glycerol + CoA. It carries out the reaction hexadecane-1,2-diol + 2 hexadecanoyl-CoA = 1,2-O,O-dihexadecanoyl-1,2-hexadecanediol + 2 CoA. It catalyses the reaction hexadecane-1,2-diol + hexadecanoyl-CoA = 2-hydroxyhexadecyl hexadecanoate + CoA. The enzyme catalyses 2-(9Z-octadecenoyl)-glycerol + hexadecanoyl-CoA = 1-hexadecanoyl-2-(9Z-octadecenoyl)-sn-glycerol + CoA. The catalysed reaction is 1,2-di-(9Z-octadecenoyl)-sn-glycerol + hexadecanoyl-CoA = 1,2-di-(9Z)-octadecenoyl-3-hexadecanoyl-sn-glycerol + CoA. It carries out the reaction hexadecan-1-ol + hexadecanoyl-CoA = hexadecanyl hexadecanoate + CoA. It catalyses the reaction all-trans-retinol + hexadecanoyl-CoA = all-trans-retinyl hexadecanoate + CoA. The enzyme catalyses 13-cis-retinol + hexadecanoyl-CoA = 13-cis-retinyl hexadecanoate + CoA. The catalysed reaction is 1,2-di-(9Z-octadecenoyl)-sn-glycerol + (9Z)-octadecenoyl-CoA = 1,2,3-tri-(9Z-octadecenoyl)-glycerol + CoA. It carries out the reaction 1,3-di-(9Z-octadecenoyl)-glycerol + (9Z)-octadecenoyl-CoA = 1,2,3-tri-(9Z-octadecenoyl)-glycerol + CoA. It catalyses the reaction 2,3-di-(9Z)-octadecenoyl-sn-glycerol + (9Z)-octadecenoyl-CoA = 1,2,3-tri-(9Z-octadecenoyl)-glycerol + CoA. The enzyme catalyses 1-O-(9Z-octadecenyl)-glycerol + (9Z)-octadecenoyl-CoA = 1-O-(9Z-octadecyl)-3-(9Z-octadecenoyl)-glycerol + CoA. The catalysed reaction is 1-(9Z-octadecenoyl)-glycerol + (9Z)-octadecenoyl-CoA = 1,2-di-(9Z-octadecenoyl)-glycerol + CoA. It carries out the reaction 2-(9Z-octadecenoyl)-glycerol + (9Z)-octadecenoyl-CoA = 1,2-di-(9Z-octadecenoyl)-sn-glycerol + CoA. It catalyses the reaction 1-O-(9Z-octadecyl)-3-(9Z-octadecenoyl)-glycerol + (9Z)-octadecenoyl-CoA = 1-O-(9Z-octadecenyl)-2,3-di-(9Z-octadecenoyl)glycerol + CoA. The enzyme catalyses 1,2-di-(9Z-octadecenoyl)-glycerol + (9Z)-octadecenoate + H(+) = 1,2,3-tri-(9Z-octadecenoyl)-glycerol + H2O. Its pathway is lipid metabolism; glycerolipid metabolism. Catalyzes the terminal and only committed step in triacylglycerol synthesis by using diacylglycerol and fatty acyl CoA as substrates. Highly expressed in epithelial cells of the small intestine and its activity is essential for the absorption of dietary fats. In liver, plays a role in esterifying exogenous fatty acids to glycerol, and is required to synthesize fat for storage. Also present in female mammary glands, where it produces fat in the milk. May be involved in VLDL (very low density lipoprotein) assembly. In contrast to DGAT2 it is not essential for survival. Functions as the major acyl-CoA retinol acyltransferase (ARAT) in the skin, where it acts to maintain retinoid homeostasis and prevent retinoid toxicity leading to skin and hair disorders. Exhibits additional acyltransferase activities, includin acyl CoA:monoacylglycerol acyltransferase (MGAT), wax monoester and wax diester synthases. Also able to use 1-monoalkylglycerol (1-MAkG) as an acyl acceptor for the synthesis of monoalkyl-monoacylglycerol (MAMAG). The chain is Diacylglycerol O-acyltransferase 1 from Mus musculus (Mouse).